A 335-amino-acid chain; its full sequence is Transaldolase (335 aa).

The active-site Schiff-base intermediate with substrate is Lys-135.

The protein belongs to the transaldolase family. Type 1 subfamily. As to quaternary structure, homodimer.

The protein resides in the cytoplasm. The enzyme catalyses D-sedoheptulose 7-phosphate + D-glyceraldehyde 3-phosphate = D-erythrose 4-phosphate + beta-D-fructose 6-phosphate. The protein operates within carbohydrate degradation; pentose phosphate pathway; D-glyceraldehyde 3-phosphate and beta-D-fructose 6-phosphate from D-ribose 5-phosphate and D-xylulose 5-phosphate (non-oxidative stage): step 2/3. In terms of biological role, transaldolase is important for the balance of metabolites in the pentose-phosphate pathway. In Prochlorococcus marinus (strain SARG / CCMP1375 / SS120), this protein is Transaldolase.